The following is a 333-amino-acid chain: D-fructose 1,6-bisphosphatase class 2/sedoheptulose 1,7-bisphosphatase (333 aa).

Mn(2+) is bound by residues aspartate 33, glutamate 57, aspartate 85, and glutamate 88. Residues 88–90, tyrosine 119, 164–166, and 186–188 each bind substrate; these read EGT, RTR, and DGD. Glutamate 213 is a Mn(2+) binding site.

Belongs to the FBPase class 2 family. As to quaternary structure, homotetramer. Requires Mn(2+) as cofactor.

The enzyme catalyses beta-D-fructose 1,6-bisphosphate + H2O = beta-D-fructose 6-phosphate + phosphate. It carries out the reaction D-sedoheptulose 1,7-bisphosphate + H2O = D-sedoheptulose 7-phosphate + phosphate. The protein operates within carbohydrate biosynthesis; Calvin cycle. Functionally, catalyzes the hydrolysis of fructose 1,6-bisphosphate (Fru 1,6-P2) and sedoheptulose 1,7-bisphosphate (Sed 1,7-P2) to fructose 6-phosphate and sedoheptulose 7-phosphate, respectively. The chain is D-fructose 1,6-bisphosphatase class 2/sedoheptulose 1,7-bisphosphatase from Prochlorococcus marinus (strain MIT 9312).